The primary structure comprises 2410 residues: Coprinoferrin synthetase (2410 aa).

The segment at 237-646 (LERRAKTNPH…GRIDTQIKVR (410 aa)) is adenylation 1. Positions 783–860 (RDCTPLEAEV…DIAQLVHVST (78 aa)) constitute a Carrier 1 domain. An O-(pantetheine 4'-phosphoryl)serine modification is found at serine 820. The interval 891–1260 (DILPPFPVQE…SVEAVVNVHD (370 aa)) is condensation 1. A disordered region spans residues 1298-1317 (ELPLPSRRSPEPVRKVNDDE). Positions 1305–1314 (RSPEPVRKVN) are enriched in basic and acidic residues. In terms of domain architecture, Carrier 2 spans 1324–1400 (LLDPVVVADL…RLARVVSNNK (77 aa)). Serine 1361 carries the O-(pantetheine 4'-phosphoryl)serine modification. The tract at residues 1436–1839 (IIPSTALQSG…RIGRTFSVPS (404 aa)) is condensation 2. A Carrier 3 domain is found at 1858 to 1932 (VQAGIIHPVL…DLVLQATEIK (75 aa)). Serine 1893 is modified (O-(pantetheine 4'-phosphoryl)serine). A condensation 3 region spans residues 1992 to 2315 (FQYLFTFKLP…TPIFNVNVNV (324 aa)).

This sequence belongs to the NRP synthetase family.

The protein operates within siderophore biosynthesis. In terms of biological role, nonribosomal peptide synthase; part of the gene cluster that mediates the biosynthesis of coprinoferrin, an acylated tripeptide hydroxamate siderophore. The biosynthesis of coprinoferrin depends on the hydroxylation of ornithine to N(5)-hydroxyornithine, catalyzed by the monooxygenase cpf2. The second step, the acylation of N(5)-hydroxy-L-ornithine to yield N(5)-hexanoyl-N(5)-hydroxyl-L-ornithine is catalyzed by a not yet identified acyltransferase. Finally, assembly of coprinoferrin is catalyzed by the nonribosomal peptide synthase (NRPS) cpf1 via amide bond formation between three N(5)-hexanoyl-N(5)-hydroxyl-L-ornithine molecules to release the linear trimer. Interestingly, proteins seemingly not directly related to biosynthesis, such as transcription factors, replication factors, and autophagy-related proteins, are conserved among the clusters homologous to the coprinoferrin cluster, suggesting that the cluster may also play developmental and cell biological functions. This Coprinopsis cinerea (strain Okayama-7 / 130 / ATCC MYA-4618 / FGSC 9003) (Inky cap fungus) protein is Coprinoferrin synthetase.